A 118-amino-acid polypeptide reads, in one-letter code: Group 1 truncated hemoglobin GlbN (118 aa).

His70 contacts heme.

Belongs to the truncated hemoglobin family. Group I subfamily. Monomer. It depends on heme as a cofactor.

The protein resides in the membrane. The sequence is that of Group 1 truncated hemoglobin GlbN (glbN) from Nostoc commune.